The following is a 256-amino-acid chain: Thiazole synthase (256 aa).

The active-site Schiff-base intermediate with DXP is the Lys-95. 1-deoxy-D-xylulose 5-phosphate-binding positions include Gly-156, 182 to 183 (AG), and 204 to 205 (NT).

The protein belongs to the ThiG family. Homotetramer. Forms heterodimers with either ThiH or ThiS.

Its subcellular location is the cytoplasm. It carries out the reaction [ThiS sulfur-carrier protein]-C-terminal-Gly-aminoethanethioate + 2-iminoacetate + 1-deoxy-D-xylulose 5-phosphate = [ThiS sulfur-carrier protein]-C-terminal Gly-Gly + 2-[(2R,5Z)-2-carboxy-4-methylthiazol-5(2H)-ylidene]ethyl phosphate + 2 H2O + H(+). It participates in cofactor biosynthesis; thiamine diphosphate biosynthesis. In terms of biological role, catalyzes the rearrangement of 1-deoxy-D-xylulose 5-phosphate (DXP) to produce the thiazole phosphate moiety of thiamine. Sulfur is provided by the thiocarboxylate moiety of the carrier protein ThiS. In vitro, sulfur can be provided by H(2)S. In Salmonella typhi, this protein is Thiazole synthase.